The sequence spans 274 residues: Kit ligand (274 aa).

The signal sequence occupies residues 1–25; it reads MKKTQTWIITCIYLQLLLFNPLVKT. The Extracellular portion of the chain corresponds to 26 to 215; sequence KGICGKRVTD…SNSIGDSNLQ (190 aa). Intrachain disulfides connect Cys-29–Cys-114 and Cys-68–Cys-164. 4 N-linked (GlcNAc...) asparagine glycosylation sites follow: Asn-90, Asn-97, Asn-145, and Asn-196. The helical transmembrane segment at 216 to 238 threads the bilayer; the sequence is WAAMALPAFFSLVIGFAFGALYW. Residues 239–274 lie on the Cytoplasmic side of the membrane; sequence KKKQPNLTRTVENIQINEEDNEISMLQEKEREFQEV.

Belongs to the SCF family. In terms of assembly, homodimer, non-covalently linked. In terms of processing, a soluble form is produced by proteolytic processing of the extracellular domain.

Its subcellular location is the cytoplasm. The protein localises to the cytoskeleton. The protein resides in the cell membrane. It localises to the cell projection. It is found in the lamellipodium. Its subcellular location is the filopodium. The protein localises to the secreted. Functionally, stimulates the proliferation of mast cells. Able to augment the proliferation of both myeloid and lymphoid hematopoietic progenitors in bone marrow culture. Also mediates cell-cell adhesion. Acts synergistically with other cytokines, probably interleukins. In Canis lupus familiaris (Dog), this protein is Kit ligand (KITLG).